Reading from the N-terminus, the 572-residue chain is Proline--tRNA ligase (572 aa).

The protein belongs to the class-II aminoacyl-tRNA synthetase family. ProS type 1 subfamily. As to quaternary structure, homodimer.

It localises to the cytoplasm. The catalysed reaction is tRNA(Pro) + L-proline + ATP = L-prolyl-tRNA(Pro) + AMP + diphosphate. Functionally, catalyzes the attachment of proline to tRNA(Pro) in a two-step reaction: proline is first activated by ATP to form Pro-AMP and then transferred to the acceptor end of tRNA(Pro). As ProRS can inadvertently accommodate and process non-cognate amino acids such as alanine and cysteine, to avoid such errors it has two additional distinct editing activities against alanine. One activity is designated as 'pretransfer' editing and involves the tRNA(Pro)-independent hydrolysis of activated Ala-AMP. The other activity is designated 'posttransfer' editing and involves deacylation of mischarged Ala-tRNA(Pro). The misacylated Cys-tRNA(Pro) is not edited by ProRS. This is Proline--tRNA ligase from Salmonella choleraesuis (strain SC-B67).